The sequence spans 591 residues: V-type ATP synthase alpha chain (591 aa).

232 to 239 is a binding site for ATP; that stretch reads GPFGAGKT.

This sequence belongs to the ATPase alpha/beta chains family.

The catalysed reaction is ATP + H2O + 4 H(+)(in) = ADP + phosphate + 5 H(+)(out). Produces ATP from ADP in the presence of a proton gradient across the membrane. The V-type alpha chain is a catalytic subunit. The chain is V-type ATP synthase alpha chain from Clostridium perfringens (strain SM101 / Type A).